The chain runs to 305 residues: D-alanine--D-alanine ligase (305 aa).

One can recognise an ATP-grasp domain in the interval 107-299 (KVIFASAGLK…FGELVLRILQ (193 aa)). An ATP-binding site is contributed by 134-185 (PLPVVVKPSREGSSVGVGIVRDPSRMQAALDEAFRYDSEILIEGFIDGREVQ). Residues D253, E266, and N268 each contribute to the Mg(2+) site.

The protein belongs to the D-alanine--D-alanine ligase family. The cofactor is Mg(2+). Mn(2+) serves as cofactor.

Its subcellular location is the cytoplasm. It catalyses the reaction 2 D-alanine + ATP = D-alanyl-D-alanine + ADP + phosphate + H(+). Its pathway is cell wall biogenesis; peptidoglycan biosynthesis. Functionally, cell wall formation. The sequence is that of D-alanine--D-alanine ligase from Citrifermentans bemidjiense (strain ATCC BAA-1014 / DSM 16622 / JCM 12645 / Bem) (Geobacter bemidjiensis).